The chain runs to 351 residues: DNA-directed RNA polymerase subunit alpha (351 aa).

Residues 1–236 (MSVNTKNWQE…DQLTLFVHFE (236 aa)) are alpha N-terminal domain (alpha-NTD). Residues 256 to 351 (DDANQLNRYL…AKKLEQELLG (96 aa)) are alpha C-terminal domain (alpha-CTD).

Belongs to the RNA polymerase alpha chain family. As to quaternary structure, homodimer. The RNAP catalytic core consists of 2 alpha, 1 beta, 1 beta' and 1 omega subunit. When a sigma factor is associated with the core the holoenzyme is formed, which can initiate transcription.

The catalysed reaction is RNA(n) + a ribonucleoside 5'-triphosphate = RNA(n+1) + diphosphate. Its function is as follows. DNA-dependent RNA polymerase catalyzes the transcription of DNA into RNA using the four ribonucleoside triphosphates as substrates. The protein is DNA-directed RNA polymerase subunit alpha of Erythrobacter litoralis (strain HTCC2594).